A 273-amino-acid polypeptide reads, in one-letter code: Ribosomal RNA small subunit methyltransferase A (273 aa).

The S-adenosyl-L-methionine site is built by N18, L20, G45, E66, D91, and N113.

This sequence belongs to the class I-like SAM-binding methyltransferase superfamily. rRNA adenine N(6)-methyltransferase family. RsmA subfamily.

The protein resides in the cytoplasm. It catalyses the reaction adenosine(1518)/adenosine(1519) in 16S rRNA + 4 S-adenosyl-L-methionine = N(6)-dimethyladenosine(1518)/N(6)-dimethyladenosine(1519) in 16S rRNA + 4 S-adenosyl-L-homocysteine + 4 H(+). Specifically dimethylates two adjacent adenosines (A1518 and A1519) in the loop of a conserved hairpin near the 3'-end of 16S rRNA in the 30S particle. May play a critical role in biogenesis of 30S subunits. In Escherichia coli O81 (strain ED1a), this protein is Ribosomal RNA small subunit methyltransferase A.